The primary structure comprises 651 residues: MSAASLYPVRPEVAATTLTDEATYKAMYQQSVVNPDGFWREQAQRLDWIKPFSVVKQTSFDDHRVDIKWFADGTLNVAYNCLDRHLEERGDSIAIIWEGDDPSEHREITYRELHAEVCKFANALRGQDVHRGDVVTIYMPMIPEAVVAMLACARIGAIHSVVFGGFSPEALAGRIIDCSSKVVITADEGLRGGKKTALKANVDRALTNPETSSVQKVIVCKRTGGEIEWNRHRDIWYHSLLEVASSTCAPKEMGAEESLFILYTSGSTGKPKGVLHTTAGYLLYAALTHERVFDYRPGEVYWCTADVGWVTGHSYIVYGPLANGATTLLFEGVPNYPDITRVSKIIDKHKVNILYTAPTAIRAMMAEGTKSVEGADGSSLRLLGSVGEPINPEAWAWYYNTVGKQNCPIVDTWWQTETGGILISPLPGATALKPGSATRPFFGVIPALVDNLGNLIEGAAEGNLVILDSWPGQSRSLYGDHDRFVDTYFKTFRGMYFTGDGARRDEDGYFWITGRVDDVLNVSGHRMGTAEIESAMVAHPKVAEAAVVGVPHDLKGQGIYVYVTLNGGEEPSDALRTELRNWVRKEIGPIASPDFIQWAPGLPKTRSGKIMRRILRKIATAEYDALGDISTLADPGVVQHLIDTHKTMNAA.

CoA contacts are provided by residues 191-194 (RGGK), threonine 311, and asparagine 335. ATP-binding positions include 387–389 (GEP), 411–416 (DTWWQT), aspartate 500, and arginine 515. Position 523 (serine 523) interacts with CoA. Position 526 (arginine 526) interacts with ATP. 3 residues coordinate Mg(2+): valine 537, histidine 539, and valine 542. Arginine 584 contributes to the CoA binding site. At lysine 609 the chain carries N6-acetyllysine.

It belongs to the ATP-dependent AMP-binding enzyme family. It depends on Mg(2+) as a cofactor. Acetylated. Deacetylation by the SIR2-homolog deacetylase activates the enzyme.

It carries out the reaction acetate + ATP + CoA = acetyl-CoA + AMP + diphosphate. Its function is as follows. Catalyzes the conversion of acetate into acetyl-CoA (AcCoA), an essential intermediate at the junction of anabolic and catabolic pathways. AcsA undergoes a two-step reaction. In the first half reaction, AcsA combines acetate with ATP to form acetyl-adenylate (AcAMP) intermediate. In the second half reaction, it can then transfer the acetyl group from AcAMP to the sulfhydryl group of CoA, forming the product AcCoA. This chain is Acetyl-coenzyme A synthetase, found in Pseudomonas syringae pv. syringae (strain B728a).